Reading from the N-terminus, the 171-residue chain is UPF0398 protein spyM18_1659 (171 aa).

It belongs to the UPF0398 family.

The polypeptide is UPF0398 protein spyM18_1659 (Streptococcus pyogenes serotype M18 (strain MGAS8232)).